The chain runs to 338 residues: Glycerol-3-phosphate dehydrogenase [NAD(P)+] (338 aa).

Residues Trp-14, Tyr-50, and Lys-110 each coordinate NADPH. Residues Lys-110, Gly-141, and Ser-143 each coordinate sn-glycerol 3-phosphate. Position 145 (Ala-145) interacts with NADPH. Lys-196, Asp-249, Ser-259, Arg-260, and Asn-261 together coordinate sn-glycerol 3-phosphate. The active-site Proton acceptor is Lys-196. Residue Arg-260 participates in NADPH binding. Glu-285 is a binding site for NADPH.

It belongs to the NAD-dependent glycerol-3-phosphate dehydrogenase family.

The protein localises to the cytoplasm. It catalyses the reaction sn-glycerol 3-phosphate + NAD(+) = dihydroxyacetone phosphate + NADH + H(+). The catalysed reaction is sn-glycerol 3-phosphate + NADP(+) = dihydroxyacetone phosphate + NADPH + H(+). It participates in membrane lipid metabolism; glycerophospholipid metabolism. Functionally, catalyzes the reduction of the glycolytic intermediate dihydroxyacetone phosphate (DHAP) to sn-glycerol 3-phosphate (G3P), the key precursor for phospholipid synthesis. This Malacoplasma penetrans (strain HF-2) (Mycoplasma penetrans) protein is Glycerol-3-phosphate dehydrogenase [NAD(P)+].